The primary structure comprises 224 residues: Casparian strip membrane protein 1 (224 aa).

The tract at residues 1–22 (MSSGEPAAVSIPIHDHHGKAPA) is disordered. The Cytoplasmic portion of the chain corresponds to 1 to 62 (MSSGEPAAVS…RGDHHRGSRC (62 aa)). The helical transmembrane segment at 63–83 (LAFLDFILRIAAFGPALAAAI) threads the bilayer. The Extracellular segment spans residues 84-110 (STGTSDETLSVFTEFYQFRARFDDFPA). A helical transmembrane segment spans residues 111–131 (FLFFLVANAIVAGYLVLSLPF). Over 132–145 (SAVLVIRPQTIGLR) the chain is Cytoplasmic. The chain crosses the membrane as a helical span at residues 146–166 (LLLLVCDMIMAAMLTAAASAA). The Extracellular portion of the chain corresponds to 167–200 (AAIVDLAHNGNLRANWVAICMQFHGFCQRTSGSV). Residues 201–221 (VASFLTVVILMFLVILAACSI) traverse the membrane as a helical segment. Topologically, residues 222-224 (RKR) are cytoplasmic.

It belongs to the Casparian strip membrane proteins (CASP) family. In terms of assembly, homodimer and heterodimers.

It localises to the cell membrane. Regulates membrane-cell wall junctions and localized cell wall deposition. Required for establishment of the Casparian strip membrane domain (CSD) and the subsequent formation of Casparian strips, a cell wall modification of the root endodermis that determines an apoplastic barrier between the intraorganismal apoplasm and the extraorganismal apoplasm and prevents lateral diffusion. The sequence is that of Casparian strip membrane protein 1 from Oryza sativa subsp. indica (Rice).